Reading from the N-terminus, the 417-residue chain is Inhibitor of growth protein 3 (417 aa).

Disordered stretches follow at residues leucine 126 to lysine 165, serine 177 to asparagine 198, and glutamine 284 to leucine 320. Residues histidine 136–serine 152 are compositionally biased toward basic residues. The segment covering serine 156 to lysine 165 has biased composition (basic and acidic residues). The segment covering serine 177–cysteine 187 has biased composition (polar residues). Composition is skewed to low complexity over residues asparagine 189–asparagine 198, glutamine 284–serine 294, and asparagine 303–leucine 320. Residues proline 359–alanine 408 form a PHD-type zinc finger. Zn(2+) is bound by residues cysteine 362, cysteine 364, cysteine 375, cysteine 380, histidine 386, cysteine 389, cysteine 402, and cysteine 405.

This sequence belongs to the ING family. Interacts with H3K4me3 and to a lesser extent with H3K4me2. Component of the NuA4 histone acetyltransferase complex.

It localises to the nucleus. Functionally, component of the NuA4 histone acetyltransferase (HAT) complex which is involved in transcriptional activation of select genes principally by acetylation of nucleosomal histone H4 and H2A. This modification may both alter nucleosome - DNA interactions and promote interaction of the modified histones with other proteins which positively regulate transcription. NuA4 may also play a direct role in DNA repair when directly recruited to sites of DNA damage. The polypeptide is Inhibitor of growth protein 3 (ing3) (Xenopus tropicalis (Western clawed frog)).